Consider the following 688-residue polypeptide: Elongation factor G (688 aa).

A tr-type G domain is found at 8 to 282 (DKFRNFGIMA…GVVDYLPSPL (275 aa)). GTP is bound by residues 17 to 24 (AHIDAGKT), 81 to 85 (DTPGH), and 135 to 138 (NKMD).

It belongs to the TRAFAC class translation factor GTPase superfamily. Classic translation factor GTPase family. EF-G/EF-2 subfamily.

It is found in the cytoplasm. Catalyzes the GTP-dependent ribosomal translocation step during translation elongation. During this step, the ribosome changes from the pre-translocational (PRE) to the post-translocational (POST) state as the newly formed A-site-bound peptidyl-tRNA and P-site-bound deacylated tRNA move to the P and E sites, respectively. Catalyzes the coordinated movement of the two tRNA molecules, the mRNA and conformational changes in the ribosome. The sequence is that of Elongation factor G from Clostridium botulinum (strain Eklund 17B / Type B).